A 148-amino-acid chain; its full sequence is 3-dehydroquinate dehydratase (148 aa).

Residue Tyr23 is the Proton acceptor of the active site. Substrate contacts are provided by Asn75, His81, and Asp88. The active-site Proton donor is the His101. Substrate-binding positions include 102-103 (LS) and Arg112.

Belongs to the type-II 3-dehydroquinase family. In terms of assembly, homododecamer.

It catalyses the reaction 3-dehydroquinate = 3-dehydroshikimate + H2O. It participates in metabolic intermediate biosynthesis; chorismate biosynthesis; chorismate from D-erythrose 4-phosphate and phosphoenolpyruvate: step 3/7. Its function is as follows. Catalyzes a trans-dehydration via an enolate intermediate. This is 3-dehydroquinate dehydratase from Xanthomonas campestris pv. campestris (strain B100).